Consider the following 103-residue polypeptide: Small ribosomal subunit protein uS10 (103 aa).

Belongs to the universal ribosomal protein uS10 family. Part of the 30S ribosomal subunit.

Involved in the binding of tRNA to the ribosomes. This Alkalilimnicola ehrlichii (strain ATCC BAA-1101 / DSM 17681 / MLHE-1) protein is Small ribosomal subunit protein uS10.